A 299-amino-acid chain; its full sequence is Tyrosine recombinase XerC (299 aa).

Residues 1 to 85 (MEQHLDAYCM…AVRGFYKYLN (85 aa)) form the Core-binding (CB) domain. The Tyr recombinase domain maps to 106–285 (RLPKTLDTDR…DFQHLATVYD (180 aa)). Residues arginine 146, lysine 170, histidine 237, arginine 240, and histidine 263 contribute to the active site. Tyrosine 272 serves as the catalytic O-(3'-phospho-DNA)-tyrosine intermediate.

The protein belongs to the 'phage' integrase family. XerC subfamily. As to quaternary structure, forms a cyclic heterotetrameric complex composed of two molecules of XerC and two molecules of XerD.

It localises to the cytoplasm. Its function is as follows. Site-specific tyrosine recombinase, which acts by catalyzing the cutting and rejoining of the recombining DNA molecules. The XerC-XerD complex is essential to convert dimers of the bacterial chromosome into monomers to permit their segregation at cell division. It also contributes to the segregational stability of plasmids. The polypeptide is Tyrosine recombinase XerC (Pseudomonas syringae pv. tomato (strain ATCC BAA-871 / DC3000)).